The chain runs to 125 residues: Small ribosomal subunit protein eS6 (125 aa).

The protein belongs to the eukaryotic ribosomal protein eS6 family.

This chain is Small ribosomal subunit protein eS6, found in Pyrococcus horikoshii (strain ATCC 700860 / DSM 12428 / JCM 9974 / NBRC 100139 / OT-3).